A 445-amino-acid polypeptide reads, in one-letter code: Argininosuccinate synthase (445 aa).

ATP is bound by residues 17 to 25 (AFSGGLDTS) and Ala43. Residue Tyr99 participates in L-citrulline binding. Residues Gly129 and Thr131 each contribute to the ATP site. L-aspartate is bound by residues Thr131, Asn135, and Asp136. Asn135 contacts L-citrulline. Residue Asp136 coordinates ATP. Residues Arg139 and Ser192 each contribute to the L-citrulline site. Asp194 is a binding site for ATP. Residues Thr201, Glu203, and Glu280 each contribute to the L-citrulline site.

It belongs to the argininosuccinate synthase family. Type 2 subfamily. As to quaternary structure, homotetramer.

The protein resides in the cytoplasm. It carries out the reaction L-citrulline + L-aspartate + ATP = 2-(N(omega)-L-arginino)succinate + AMP + diphosphate + H(+). It participates in amino-acid biosynthesis; L-arginine biosynthesis; L-arginine from L-ornithine and carbamoyl phosphate: step 2/3. The protein is Argininosuccinate synthase of Burkholderia ambifaria (strain MC40-6).